The chain runs to 103 residues: MQNQRIRIRLKGFDHRLIDQSTAEIVETAKRTGAQVRGPIPLPTRKERYTVLISPHVNKDARDQYEIRTHKRLVDIVEPTEKTVDALMRLDLAAGVDVQISLG.

It belongs to the universal ribosomal protein uS10 family. Part of the 30S ribosomal subunit.

Involved in the binding of tRNA to the ribosomes. This Shewanella frigidimarina (strain NCIMB 400) protein is Small ribosomal subunit protein uS10.